Reading from the N-terminus, the 1755-residue chain is Transposon Ty1-GR1 Gag-Pol polyprotein (1755 aa).

Low complexity predominate over residues Met-1–Ser-16. 3 disordered regions span residues Met-1–Gln-93, Pro-126–Pro-173, and Gly-352–Thr-421. Polar residues-rich tracts occupy residues Thr-48–Ser-60, Ser-71–Gln-93, and Gln-127–Phe-152. Positions Thr-153–Thr-165 are enriched in low complexity. Positions Asn-299 to His-401 are RNA-binding. Residues Asn-402–Ser-418 show a composition bias toward low complexity. Ser-416 carries the phosphoserine modification. Catalysis depends on Asp-461, which acts as the For protease activity; shared with dimeric partner. Residues Asn-583–Cys-640 form an integrase-type zinc finger-like region. Positions Asn-660–Pro-835 constitute an Integrase catalytic domain. Mg(2+)-binding residues include Asp-671 and Asp-736. Disordered stretches follow at residues Ser-956 to Lys-1087, Arg-1092 to Pro-1111, and Asp-1130 to Thr-1187. Over residues Ser-960 to Thr-969 the composition is skewed to low complexity. The segment covering Ser-1005–Thr-1015 has biased composition (polar residues). Residues Glu-1038 to Ser-1053 are compositionally biased toward basic and acidic residues. 2 stretches are compositionally biased toward polar residues: residues Tyr-1054–Asp-1082 and Pro-1101–Pro-1111. A Bipartite nuclear localization signal motif is present at residues Lys-1178–Arg-1212. A Reverse transcriptase Ty1/copia-type domain is found at Asn-1338–Gln-1476. Mg(2+)-binding residues include Asp-1346, Asp-1427, Asp-1428, Asp-1610, Glu-1652, and Asp-1685. The RNase H Ty1/copia-type domain maps to Asp-1610–Lys-1752.

As to quaternary structure, the capsid protein forms a homotrimer, from which the VLPs are assembled. The protease is a homodimer, whose active site consists of two apposed aspartic acid residues. In terms of processing, initially, virus-like particles (VLPs) are composed of the structural unprocessed proteins Gag and Gag-Pol, and also contain the host initiator methionine tRNA (tRNA(i)-Met) which serves as a primer for minus-strand DNA synthesis, and a dimer of genomic Ty RNA. Processing of the polyproteins occurs within the particle and proceeds by an ordered pathway, called maturation. First, the protease (PR) is released by autocatalytic cleavage of the Gag-Pol polyprotein yielding capsid protein p45 and a Pol-p154 precursor protein. This cleavage is a prerequisite for subsequent processing of Pol-p154 at the remaining sites to release the mature structural and catalytic proteins. Maturation takes place prior to the RT reaction and is required to produce transposition-competent VLPs.

The protein resides in the cytoplasm. It is found in the nucleus. It catalyses the reaction DNA(n) + a 2'-deoxyribonucleoside 5'-triphosphate = DNA(n+1) + diphosphate. The catalysed reaction is Endonucleolytic cleavage to 5'-phosphomonoester.. Capsid protein (CA) is the structural component of the virus-like particle (VLP), forming the shell that encapsulates the retrotransposons dimeric RNA genome. The particles are assembled from trimer-clustered units and there are holes in the capsid shells that allow for the diffusion of macromolecules. CA also has nucleocapsid-like chaperone activity, promoting primer tRNA(i)-Met annealing to the multipartite primer-binding site (PBS), dimerization of Ty1 RNA and initiation of reverse transcription. Its function is as follows. The aspartyl protease (PR) mediates the proteolytic cleavages of the Gag and Gag-Pol polyproteins after assembly of the VLP. Functionally, reverse transcriptase/ribonuclease H (RT) is a multifunctional enzyme that catalyzes the conversion of the retro-elements RNA genome into dsDNA within the VLP. The enzyme displays a DNA polymerase activity that can copy either DNA or RNA templates, and a ribonuclease H (RNase H) activity that cleaves the RNA strand of RNA-DNA heteroduplexes during plus-strand synthesis and hydrolyzes RNA primers. The conversion leads to a linear dsDNA copy of the retrotransposon that includes long terminal repeats (LTRs) at both ends. In terms of biological role, integrase (IN) targets the VLP to the nucleus, where a subparticle preintegration complex (PIC) containing at least integrase and the newly synthesized dsDNA copy of the retrotransposon must transit the nuclear membrane. Once in the nucleus, integrase performs the integration of the dsDNA into the host genome. The polypeptide is Transposon Ty1-GR1 Gag-Pol polyprotein (TY1B-GR1) (Saccharomyces cerevisiae (strain ATCC 204508 / S288c) (Baker's yeast)).